We begin with the raw amino-acid sequence, 180 residues long: Ribosome-recycling factor (180 aa).

Residues S135 to Q156 are disordered.

The protein belongs to the RRF family.

It localises to the cytoplasm. Its function is as follows. Responsible for the release of ribosomes from messenger RNA at the termination of protein biosynthesis. May increase the efficiency of translation by recycling ribosomes from one round of translation to another. The chain is Ribosome-recycling factor from Oenococcus oeni (strain ATCC BAA-331 / PSU-1).